The primary structure comprises 775 residues: Hepatocyte growth factor-regulated tyrosine kinase substrate (775 aa).

In terms of domain architecture, VHS spans 15 to 143 (ATSQLLLETD…IMKVEGHVFP (129 aa)). The FYVE-type zinc finger occupies 160–220 (WVDAEECHRC…VCEPCYEQLN (61 aa)). The Zn(2+) site is built by Cys-166, Cys-169, Cys-182, Cys-185, Cys-190, and Cys-193. Lys-207 bears the N6-acetyllysine mark. Residues Cys-212 and Cys-215 each coordinate Zn(2+). The residue at position 216 (Tyr-216) is a Phosphotyrosine. Residues 223-319 (AEGKASSTTE…SPVNSSAPLA (97 aa)) form a disordered region. The tract at residues 225 to 541 (GKASSTTELP…QRLQEQEKER (317 aa)) is interaction with SNX1. The UIM domain maps to 258 to 277 (QEEEELQLALALSQSEAEEK). Over residues 307-316 (LYSSPVNSSA) the composition is skewed to polar residues. Residues Tyr-308, Tyr-329, and Tyr-334 each carry the phosphotyrosine modification. Residues 338–405 (KQEEARKSPT…NGESEESHEQ (68 aa)) are disordered. The interval 443–541 (SINTMHPQLL…QRLQEQEKER (99 aa)) is interaction with SNAP25 and TRAK2. An interaction with STAM region spans residues 452–570 (LELLNQLDER…FPLPYAQLQA (119 aa)). Positions 478–775 (ARGALSALRE…GSEAQLISFD (298 aa)) are interaction with NF2. N6-succinyllysine is present on Lys-549. The segment covering 640–657 (PGAQAAPQAQAGPTTSPA) has biased composition (low complexity). Disordered regions lie at residues 640 to 690 (PGAQ…PQTS) and 719 to 775 (QDAS…ISFD). Over residues 658-690 (YSSYQPTPTPGYQSVASQAPQSLPAISQPPQTS) the composition is skewed to polar residues. Positions 744–761 (TGPPQQQPPVAQPAPTQG) are enriched in pro residues.

As to quaternary structure, component of the ESCRT-0 complex composed of STAM or STAM2 and HGS. Part of a complex at least composed of HSG, STAM2 (or probably STAM) and EPS15. Interacts with STAM. Interacts with STAM2. Interacts with EPS15; the interaction is direct, calcium-dependent and inhibited by SNAP25. Identified in a complex with STAM and LITAF. Found in a complex with STAM and E3 ligase ITCH and DTX3L. Interacts with E3 ligase DTX3L; the interaction brings together STAM and HSG, promotes their recruitment to early endosomes and decreases STAM and HGS ubiquitination by ITCH. Interacts with NF2; the interaction is direct. Interacts with ubiquitin; the interaction is direct. Interacts with VPS37C. Interacts with SMAD1, SMAD2 and SMAD3. Interacts with TSG101; the interaction mediates the association with the ESCRT-I complex. Interacts with SNAP25; the interaction is direct and decreases with addition of increasing concentrations of free calcium. Interacts with SNX1; the interaction is direct. Component of a 550 kDa membrane complex at least composed of HGS and SNX1 but excluding EGFR. Interacts with TRAK1. Interacts with TRAK2. Component of the CART complex, at least composed of ACTN4, HGS/HRS, MYO5B and TRIM3. Interacts with ARRDC3. Identified in a complex containing at least ARRDC4, AVPR2 and HGS. Interacts (via UIM domain) with UBQLN1 (via ubiquitin-like domain). Interacts with LAPTM4B; promotes HGS ubiquitination. Phosphorylated on Tyr-334. This phosphorylation occurs in response to EGF. A minor site of phosphorylation on Tyr-329 is detected. Protein phosphorylation may also be triggered in response to IL-2, GM-CSF and HGF. Post-translationally, ubiquitinated by ITCH. Ubiquitous expression in adult and fetal tissues with higher expression in testis.

Its subcellular location is the cytoplasm. It is found in the early endosome membrane. The protein localises to the endosome. The protein resides in the multivesicular body membrane. Its function is as follows. Involved in intracellular signal transduction mediated by cytokines and growth factors. When associated with STAM, it suppresses DNA signaling upon stimulation by IL-2 and GM-CSF. Could be a direct effector of PI3-kinase in vesicular pathway via early endosomes and may regulate trafficking to early and late endosomes by recruiting clathrin. May concentrate ubiquitinated receptors within clathrin-coated regions. Involved in down-regulation of receptor tyrosine kinase via multivesicular body (MVBs) when complexed with STAM (ESCRT-0 complex). The ESCRT-0 complex binds ubiquitin and acts as a sorting machinery that recognizes ubiquitinated receptors and transfers them to further sequential lysosomal sorting/trafficking processes. May contribute to the efficient recruitment of SMADs to the activin receptor complex. Involved in receptor recycling via its association with the CART complex, a multiprotein complex required for efficient transferrin receptor recycling but not for EGFR degradation. In Mus musculus (Mouse), this protein is Hepatocyte growth factor-regulated tyrosine kinase substrate (Hgs).